The sequence spans 661 residues: Heme transporter BhuA (661 aa).

The signal sequence occupies residues 1–23 (MKFTRTLVLASTSLLATVATSQA). A TBDR plug domain is found at 48-159 (KDNIEATGGT…AAGAIRYETV (112 aa)). In terms of domain architecture, TBDR beta-barrel spans 170–661 (TFGARIIGSY…TFTFQTAFKF (492 aa)).

The protein belongs to the TonB-dependent receptor family.

It localises to the cell outer membrane. Functionally, heme transporter. This is Heme transporter BhuA (bhuA) from Brucella abortus biovar 1 (strain 9-941).